A 207-amino-acid polypeptide reads, in one-letter code: Ras-related protein Rab-8B (207 aa).

Positions 17, 18, 19, 20, 21, 22, 23, 35, 39, and 40 each coordinate GTP. Thr22 is a binding site for Mg(2+). 2 consecutive short sequence motifs (switch) follow at residues 31–45 (DAFN…GIDF) and 63–80 (DTAG…YYRG). Mg(2+)-binding residues include Thr40 and Asp63. Gly66 is a GTP binding site. A Phosphothreonine; by LRRK2 modification is found at Thr72. The GTP site is built by Asn121, Lys122, Asp124, Ala152, and Lys153. Ser180 and Ser183 each carry phosphoserine. A Cysteine methyl ester modification is found at Cys204. The S-geranylgeranyl cysteine moiety is linked to residue Cys204. The propeptide at 205–207 (SLL) is removed in mature form.

This sequence belongs to the small GTPase superfamily. Rab family. Associated with actin, delta-catenin and alpha and beta tubulins. Interacts with OTOF. Interacts with PEX5R. Interacts with RAB3IP. Interacts with VIM. Interacts with CDH1. Interacts with MICALL2. Interacts with GDI1, GDI2, CHML and CHM; phosphorylation at Thr-72 disrupts these interactions. Interacts with MICAL1. The cofactor is Mg(2+). Post-translationally, phosphorylation of Thr-72 in the switch II region by LRRK2 prevents the association of RAB regulatory proteins, including CHM, CHML and RAB GDP dissociation inhibitors GDI1 and GDI2.

Its subcellular location is the cell membrane. The protein resides in the cytoplasmic vesicle. It localises to the phagosome membrane. It is found in the endosome membrane. It carries out the reaction GTP + H2O = GDP + phosphate + H(+). Regulated by guanine nucleotide exchange factors (GEFs) including RAB3IP/RABIN8 which promotes the exchange of bound GDP for free GTP. Regulated by GTPase activating proteins (GAPs) which increase the GTP hydrolysis activity. Inhibited by GDP dissociation inhibitors (GDIs). In terms of biological role, the small GTPases Rab are key regulators of intracellular membrane trafficking, from the formation of transport vesicles to their fusion with membranes. Rabs cycle between an inactive GDP-bound form and an active GTP-bound form that is able to recruit to membranes different sets of downstream effectors directly responsible for vesicle formation, movement, tethering and fusion. RAB8B may be involved in polarized vesicular trafficking and neurotransmitter release. May participate in cell junction dynamics in Sertoli cells. May also participate in the export of a subset of neosynthesized proteins through a Rab8-Rab10-Rab11-dependent endososomal export route. The sequence is that of Ras-related protein Rab-8B from Mus musculus (Mouse).